The primary structure comprises 312 residues: Glyoxylate/hydroxypyruvate reductase A (312 aa).

Residue arginine 227 is part of the active site. The active-site Proton donor is the histidine 275.

Belongs to the D-isomer specific 2-hydroxyacid dehydrogenase family. GhrA subfamily.

It is found in the cytoplasm. It catalyses the reaction glycolate + NADP(+) = glyoxylate + NADPH + H(+). It carries out the reaction (R)-glycerate + NAD(+) = 3-hydroxypyruvate + NADH + H(+). The enzyme catalyses (R)-glycerate + NADP(+) = 3-hydroxypyruvate + NADPH + H(+). Functionally, catalyzes the NADPH-dependent reduction of glyoxylate and hydroxypyruvate into glycolate and glycerate, respectively. This Enterobacter sp. (strain 638) protein is Glyoxylate/hydroxypyruvate reductase A.